The chain runs to 776 residues: ADP-ribosylation factor GTPase-activating protein AGD2 (776 aa).

The BAR domain occupies Ala-2–Gln-226. Residues Gln-248–Gly-267 are disordered. Positions Glu-290–Thr-421 constitute a PH domain. Positions Asp-467–Ala-604 constitute an Arf-GAP domain. A C4-type zinc finger spans residues Cys-482–Cys-505. 2 ANK repeats span residues Gln-683 to Met-712 and His-716 to Ile-745.

As to expression, expressed in roots, hypocotyls, cotyledons, leaf and shoot apical meristems and siliques.

Functionally, probable GTPase-activating protein. The polypeptide is ADP-ribosylation factor GTPase-activating protein AGD2 (AGD2) (Arabidopsis thaliana (Mouse-ear cress)).